The chain runs to 292 residues: Outer membrane protein assembly factor BamD (292 aa).

A signal peptide spans 1 to 26 (MIQRPTFFTPTHLLAMLLATFVLITG). The N-palmitoyl cysteine moiety is linked to residue Cys-27. Cys-27 carries the S-diacylglycerol cysteine lipid modification.

It belongs to the BamD family. In terms of assembly, part of the Bam complex.

Its subcellular location is the cell outer membrane. In terms of biological role, part of the outer membrane protein assembly complex, which is involved in assembly and insertion of beta-barrel proteins into the outer membrane. The polypeptide is Outer membrane protein assembly factor BamD (Xylella fastidiosa (strain 9a5c)).